The primary structure comprises 193 residues: Cytochrome c biogenesis ATP-binding export protein CcmA (193 aa).

The 183-residue stretch at 9 to 191 (LSASGLAILR…AAGFPVTAEV (183 aa)) folds into the ABC transporter domain. 41 to 48 (GANGAGKT) serves as a coordination point for ATP.

Belongs to the ABC transporter superfamily. CcmA exporter (TC 3.A.1.107) family. As to quaternary structure, the complex is composed of two ATP-binding proteins (CcmA) and two transmembrane proteins (CcmB).

Its subcellular location is the cell inner membrane. The catalysed reaction is heme b(in) + ATP + H2O = heme b(out) + ADP + phosphate + H(+). Functionally, part of the ABC transporter complex CcmAB involved in the biogenesis of c-type cytochromes; once thought to export heme, this seems not to be the case, but its exact role is uncertain. Responsible for energy coupling to the transport system. This Hyphomonas neptunium (strain ATCC 15444) protein is Cytochrome c biogenesis ATP-binding export protein CcmA.